Here is a 437-residue protein sequence, read N- to C-terminus: Na(+)/H(+) antiporter NhaA (437 aa).

A run of 11 helical transmembrane segments spans residues 12-32, 65-85, 103-123, 133-153, 162-182, 186-206, 214-234, 308-328, 333-353, 377-397, and 412-432; these read SMNI…AVIA, LTMI…MVGL, ALPF…YSMV, GLAI…SLLG, IFLT…IAIF, HVAY…YFIG, IFFL…GIHS, GAVN…VMFS, VIGG…FLGI, ISGV…IANL, and LGVL…LHWV.

The protein belongs to the NhaA Na(+)/H(+) (TC 2.A.33) antiporter family.

It localises to the cell inner membrane. The enzyme catalyses Na(+)(in) + 2 H(+)(out) = Na(+)(out) + 2 H(+)(in). In terms of biological role, na(+)/H(+) antiporter that extrudes sodium in exchange for external protons. This chain is Na(+)/H(+) antiporter NhaA, found in Bacteroides fragilis (strain ATCC 25285 / DSM 2151 / CCUG 4856 / JCM 11019 / LMG 10263 / NCTC 9343 / Onslow / VPI 2553 / EN-2).